Reading from the N-terminus, the 437-residue chain is Transmembrane protease serine 4 (437 aa).

At 1-32 (MLQDPDSDQPLNSLDVKPLRKPRIPMETFRKV) the chain is on the cytoplasmic side. A helical; Signal-anchor for type II membrane protein membrane pass occupies residues 33 to 53 (GIPIIIALLSLASIIIVVVLI). Over 54 to 437 (KVILDKYYFL…WIYNVWKAEL (384 aa)) the chain is Extracellular. Residues 61–93 (YFLCGQPLHFIPRKQLCDGELDCPLGEDEEHCV) enclose the LDL-receptor class A domain. 8 disulfides stabilise this stretch: Cys64-Cys83, Cys77-Cys92, Cys127-Cys183, Cys140-Cys193, Cys196-Cys310, Cys230-Cys246, Cys356-Cys372, and Cys383-Cys410. In terms of domain architecture, SRCR spans 94–204 (KSFPEGPAVA…ACGKSLKTPR (111 aa)). N-linked (GlcNAc...) asparagine glycans are attached at residues Asn130 and Asn178. One can recognise a Peptidase S1 domain in the interval 205-434 (VVGVEEASVD…YLNWIYNVWK (230 aa)). Active-site charge relay system residues include His245 and Asp290. The active-site Charge relay system is Ser387.

It belongs to the peptidase S1 family. In terms of processing, proteolytically processed; probably by an autocatalytic mechanism. In terms of tissue distribution, high levels in pancreatic, gastric, colorectal and ampullary cancer. Very weak expression in normal gastrointestinal and urogenital tract. Coexpressed with ACE2 within mature enterocytes.

It is found in the cell membrane. The protein localises to the secreted. In terms of biological role, plasma membrane-anchored serine protease that directly induces processing of pro-uPA/PLAU into the active form through proteolytic activity. Seems to be capable of activating ENaC. (Microbial infection) In gut epithelial cells, facilitates human coronavirus SARS-CoV-2 infection through, at least, the cleavage of coronavirus spike glycoproteins which activates the glycoprotein for host cell entry. The sequence is that of Transmembrane protease serine 4 from Homo sapiens (Human).